The primary structure comprises 645 residues: Macrolide export ATP-binding/permease protein MacB (645 aa).

The ABC transporter domain maps to Ile6–Ala244. Gly42–Ser49 is an ATP binding site. 4 helical membrane-spanning segments follow: residues Ala274–Gly294, Ile526–Val546, Ala574–Val594, and Ala596–Met616.

It belongs to the ABC transporter superfamily. Macrolide exporter (TC 3.A.1.122) family. As to quaternary structure, homodimer.

The protein resides in the cell inner membrane. In terms of biological role, non-canonical ABC transporter that contains transmembrane domains (TMD), which form a pore in the inner membrane, and an ATP-binding domain (NBD), which is responsible for energy generation. Confers resistance against macrolides. The sequence is that of Macrolide export ATP-binding/permease protein MacB from Nitrobacter winogradskyi (strain ATCC 25391 / DSM 10237 / CIP 104748 / NCIMB 11846 / Nb-255).